The chain runs to 622 residues: Dynein axonemal assembly factor 1 (622 aa).

The disordered stretch occupies residues 1–80 (MHPEVSEPQA…ARNDRDDRGP (80 aa)). The span at 22 to 42 (AGDHGRAGPGVRKEEINETKE) shows a compositional bias: basic and acidic residues. The span at 48–59 (STTSCQSQKQQS) shows a compositional bias: low complexity. The span at 62 to 80 (SRLDCRSGYARNDRDDRGP) shows a compositional bias: basic and acidic residues. 6 LRR repeats span residues 101–123 (ALNDTLYLHFKGFDRIENLEEYT), 124–145 (GLRCLWLECNGIQRIENLQAQS), 146–167 (ELRCLFLQVNLLHKIENLEPLQ), 168–189 (KLDALNLSNNYIKTIENLSCLP), 190–211 (VLNTLQMAHNRLETVADIQHLR), and 215–236 (RLCVLDLSHNMLSDPEILSVLE). The LRRCT domain maps to 249–288 (NPVTKHIPNYRRTVTVRLKQLTYLDDRPVFPKDRACAEAW). The span at 326 to 336 (EERKKARDKGE) shows a compositional bias: basic and acidic residues. Positions 326–360 (EERKKARDKGETPLPDSEESSSTSPEAQDKPPLGE) are disordered. Over residues 337 to 351 (TPLPDSEESSSTSPE) the composition is skewed to low complexity. Phosphoserine is present on residues serine 349, serine 464, and serine 487. 2 disordered regions span residues 481-503 (SSLSDDSDPELNDSPLPMLEHTP) and 540-622 (LETQ…FGLD). Polar residues predominate over residues 540-550 (LETQGQVFSTT).

The protein belongs to the DNAAF1 family.

It localises to the cell projection. It is found in the cilium. Functionally, cilium-specific protein required for the stability of the ciliary architecture. Plays a role in cytoplasmic preassembly of dynein arms. Involved in regulation of microtubule-based cilia and actin-based brush border microvilli. This Peromyscus leucopus (White-footed mouse) protein is Dynein axonemal assembly factor 1 (Dnaaf1).